The primary structure comprises 134 residues: Galectin-1 (134 aa).

Ala1 is subject to N-acetylalanine. The Galectin domain occupies 4 to 134 (GVAVTNLNLK…GLAFKSITTE (131 aa)). A beta-D-galactoside-binding positions include 45 to 49 (HFNAR), His53, Asn62, and 69 to 72 (WGSE).

In terms of assembly, homodimer.

The protein resides in the secreted. It is found in the extracellular space. Its subcellular location is the extracellular matrix. Its function is as follows. May regulate cell apoptosis and cell differentiation. Binds beta-galactoside and a wide array of complex carbohydrates. This is Galectin-1 from Rhinella arenarum (Argentine common toad).